A 147-amino-acid polypeptide reads, in one-letter code: Biogenesis of lysosome-related organelles complex 1 subunit 1 (147 aa).

2 disordered regions span residues 1 to 25 (MLTS…VRRK) and 125 to 147 (SSGA…PSAT).

This sequence belongs to the BLOC1S1 family. Component of the biogenesis of lysosome-related organelles complex-1 (BLOC-1) composed of Blos1, Blos2, Blos3, Blos4, Dysb, Muted, Pldn and Snapin. Interacts with Pldn.

Functionally, component of the biogenesis of lysosome-related organelles complex-1 (BLOC-1) involved in pigment granule biogenesis and membrane trafficking in synapses. In response to high synaptic activity at neuromuscular junctions, stabilizes Pldn protein levels and, together with Pldn, plays a role in promoting efficient synaptic vesicle recycling and re-formation through early endosomes. The chain is Biogenesis of lysosome-related organelles complex 1 subunit 1 from Drosophila melanogaster (Fruit fly).